The chain runs to 363 residues: 3-isopropylmalate dehydrogenase (363 aa).

Residue 78–91 (GPKWEHLPPAEQPE) coordinates NAD(+). Positions 99, 109, 138, and 227 each coordinate substrate. D227, D251, and D255 together coordinate Mg(2+). An NAD(+)-binding site is contributed by 285–297 (GSAPDIAGKGIAN).

This sequence belongs to the isocitrate and isopropylmalate dehydrogenases family. LeuB type 1 subfamily. As to quaternary structure, homodimer. The cofactor is Mg(2+). Requires Mn(2+) as cofactor.

Its subcellular location is the cytoplasm. It carries out the reaction (2R,3S)-3-isopropylmalate + NAD(+) = 4-methyl-2-oxopentanoate + CO2 + NADH. It functions in the pathway amino-acid biosynthesis; L-leucine biosynthesis; L-leucine from 3-methyl-2-oxobutanoate: step 3/4. Its function is as follows. Catalyzes the oxidation of 3-carboxy-2-hydroxy-4-methylpentanoate (3-isopropylmalate) to 3-carboxy-4-methyl-2-oxopentanoate. The product decarboxylates to 4-methyl-2 oxopentanoate. The protein is 3-isopropylmalate dehydrogenase of Photorhabdus laumondii subsp. laumondii (strain DSM 15139 / CIP 105565 / TT01) (Photorhabdus luminescens subsp. laumondii).